The sequence spans 409 residues: NADH-ubiquinone oxidoreductase chain 4 (409 aa).

Transmembrane regions (helical) follow at residues 9-29 (LYFF…GFVA), 44-64 (SFSF…VLLS), 68-88 (FMLL…FVPS), 90-110 (VILM…MILG), 125-145 (IFYA…SFFF), 160-180 (VFVL…HLWL), 194-214 (LLAG…LGCL), 221-241 (VWIV…MFQS), 246-268 (LAAY…IIMS), 273-295 (GVIL…GEFY), 305-325 (YMSS…VVFL), 352-372 (FSFW…IYLL), and 389-409 (VGFS…SVFF).

It belongs to the complex I subunit 4 family.

Its subcellular location is the mitochondrion membrane. The catalysed reaction is a ubiquinone + NADH + 5 H(+)(in) = a ubiquinol + NAD(+) + 4 H(+)(out). Functionally, core subunit of the mitochondrial membrane respiratory chain NADH dehydrogenase (Complex I) that is believed to belong to the minimal assembly required for catalysis. Complex I functions in the transfer of electrons from NADH to the respiratory chain. The immediate electron acceptor for the enzyme is believed to be ubiquinone. This Ascaris suum (Pig roundworm) protein is NADH-ubiquinone oxidoreductase chain 4 (ND4).